The chain runs to 560 residues: Calnexin homolog (560 aa).

Positions M1–A22 are cleaved as a signal peptide. Residues D23 to G489 lie on the Lumenal side of the membrane. An intrachain disulfide couples C132 to C163. 4 residues coordinate an alpha-D-glucoside: Y136, K138, Y154, and D161. Positions I242–D375 are p domain (Extended arm). 5 tandem repeats follow at residues D244–D255, D261–E272, D280–E291, D299–D310, and G314–P324. 2 4 X approximate repeats regions span residues D244–D310 and G314–P371. The interval W253 to D273 is disordered. C326 and C332 are oxidised to a cystine. Tandem repeats lie at residues G333 to P343, G347 to P357, and G361 to P371. Position 391 (E391) interacts with an alpha-D-glucoside. N-linked (GlcNAc...) asparagine glycosylation occurs at N418. The chain crosses the membrane as a helical span at residues I490–A512. At S513–D560 the chain is on the cytoplasmic side. A disordered region spans residues A517–D560. The span at E525–D544 shows a compositional bias: basic and acidic residues. T551 bears the Phosphothreonine mark. The residue at position 553 (S553) is a Phosphoserine. T555 carries the post-translational modification Phosphothreonine.

The protein belongs to the calreticulin family.

It localises to the endoplasmic reticulum membrane. Calcium-binding protein that interacts with newly synthesized monoglucosylated glycoproteins in the endoplasmic reticulum. It may act in assisting protein assembly and/or in the retention within the ER of unassembled protein subunits. It seems to play a major role in the quality control apparatus of the ER by the retention of incorrectly folded proteins. This chain is Calnexin homolog (cal1), found in Schizosaccharomyces pombe (strain 972 / ATCC 24843) (Fission yeast).